The chain runs to 67 residues: Lantibiotic Flvbeta.b (67 aa).

Residues 1–34 constitute a propeptide, cleaved by FlvT; it reads MDNNTKLQKLYEQLAATGSEKELDAMLDENMAGA. S36 carries the post-translational modification 2,3-didehydroalanine (Ser); by FlvM2. 2 positions are modified to 2,3-didehydrobutyrine; by FlvM2: T39 and T43. 3 consecutive cross-links (beta-methyllanthionine (Thr-Cys); by FlvM2) follow at residues 50-56, 58-61, and 62-65; these read TTGFDWC, TGAC, and TYSC.

Post-translationally, contains DL-beta-methyllanthionine, when coepressed in E.coli with the flavecin synthetase FlvM2.

The protein resides in the secreted. In terms of biological role, lanthionine-containing peptide antibiotic (lantibiotic) only active on Gram-positive bacteria in synergy with Flvalpha.a. Is not active in absence of Flvalpha.a, which is encoded by the same operon than Flvbeta.b. The bactericidal activity of lantibiotics is based on depolarization of energized bacterial cytoplasmic membranes, initiated by the formation of aqueous transmembrane pores. This Ruminococcus flavefaciens protein is Lantibiotic Flvbeta.b.